The primary structure comprises 2206 residues: MGAQVSSQKVGAHENSNRAYGGSTINYTTINYYKDSASNAASKQDYSQDPSKFTEPLKDVLIKTAPALNSPNVEACGYSDRVLQLTLGNSTITTQEAANSVVAYGRWPEFIRDDEANPVDQPTEPDVATCRFYTLDTVMWGKESKGWWWKLPDALRDMGLFGQNMYYHYLGRSGYTVHVQCNASKFHQGALGVFAIPEYCLAGDSDKQRYTSYANANPGERGGKFYSQFNKDNAVTSPKREFCPVDYLLGCGVLLGNAFVYPHQIINLRTNNSATIVLPYVNALAIDSMVKHNNWGIAILPLSPLDFAQDSSVEIPITVTIAPMCSEFNGLRNVTAPKFQGLPVLNTPGSNQYLTSDNHQSPCAIPEFDVTPPIDIPGEVKNMMELAEIDTMIPLNLESTKRNTMDMYRVTLSDSADLSQPILCLSLSPASDPRLSHTMLGEVLNYYTHWAGSLKFTFLFCGSMMATGKILVAYAPPGAQPPTSRKEAMLGTHVIWDLGLQSSCTMVVPWISNVTYRQTTQDSFTEGGYISMFYQTRIVVPLSTPKSMSMLGFVSACNDFSVRLLRDTTHISQSALPQGIEDLISEVAQGALTLSLPKQQDSLPDTKASGPAHSKEVPALTAVETGATNPLAPSDTVQTRHVVQRRSRSESTIESFFARGACVAIIEVDNEQPTTRAQKLFAMWRITYKDTVQLRRKLEFFTYSRFDMEFTFVVTANFTNANNGHALNQVYQIMYIPPGAPTPKSWDDYTWQTSSNPSIFYTYGAAPARISVPYVGLANAYSHFYDGFAKVPLKTDANDQIGDSLYSAMTVDDFGVLAVRVVNDHNPTKVTSKVRIYMKPKHVRVWCPRPPRAVPYYGPGVDYKNNLDPLSEKGLTTYGFGHQNKAVYTAGYKICNYHLATKEDLQNTVSIMWNRDLLVVESKAQGTDSIARCNCNAGVYYCESRRKYYPVSFVGPTFQYMEANDYYPARYQSHMLIGHGFASPGDCGGILRCQHGVIGIVTAGGEGLVAFSDIRDLYAYEEEAMEQGISNYIESLGAAFGSGFTQQIGDKISELTSMVTSTITEKLLKNLIKIISSLVIITRNYEDTTTVLATLALLGCDVSPWQWLKKKACDTLEIPYVIRQGDSWLKKFTEACNAAKGLEWVSNKISKFIDWLRERIIPQARDKLEFVTKLKQLEMLENQISTIHQSCPSQEHQEILFNNVRWLSIQSKRFAPLYALEAKRIQKLEHTINNYIQFKSKHRIEPVCLLVHGSPGTGKSVATNLIARAIAEKENTSTYSLPPDPSHFDGYKQQGVVIMDDLNQNPDGADMKLFCQMVSTVEFIPPMASLEEKGILFTSNYVLASTNSSRITPPTVAHSDALARRFAFDMDIQVMGEYSRDGKLNMAMATETCKDCHQPANFKRCCPLVCGKAIQLMDKSSRVRYSVDQITTMIINERNRRSNIGNCMEALFQGPLQYKDLKIDIKTRPPPECINDLLQAVDSQEVRDYCEKKGWIVNITSQVQTERNINRAMTILQAVTTFAAVAGVVYVMYKLFAGHQGAYTGLPNKRPNVPTIRAAKVQGPGFDYAVAMAKRNIVTATTSKGEFTMLGVHDNVAILPTHASPGESIVIDGKEVEILDAKALEDQAGTNLEITIITLKRNEKFRDIRQHIPTQITETNDGVLIVNTSKYPNMYVPVGAVTEQGYLNLGGRQTARILMYNFPTRAGQCGGVITCTGKVIGMHVGGNGSHGFAAALKRSYFTQSQGEIQWMRPSKEAGYPIINAPTKTKLEPSAFHYVFEGVKEPAVLTKNDPRLKTDFEEAIFSKYVGNKITEVDEYMKEAVDHYAGQLMSLDISTEQMCLEDAMYGTDGLEALDLSTSAGYPYVAMGKKKRDILNKQTRDTKEMQRLLDAYGINLPLVTYVKDELRSKTKVEQGKSRLIEASSLNDSVAMRMAFGNLYAAFHRNPGVVTGSAVGCDPDLFWSKIPVLMEEKLFAFDYTGYDASLSPAWFEALKMVLEKIGFGDRVDYIDYLNHSHHLYKNKIYCVKGGMPSGCSGTSIFNSMINNLIIRTLLLKTYKGIDLDHLKMIAYGDDVIASYPHEVDASLLAQSGKDYGLTMTPADKSATFETVTWENVTFLKRFFRADEKYPFLIHPVMPMKEIHESIRWTKDPRNTQDHVRSLCLLAWHNGEEEYNKFLAKIRSVPIGRALLLPEYSTLYRRWLDSF.

Residue Gly2 is the site of N-myristoyl glycine; by host attachment. The Cytoplasmic portion of the chain corresponds to 2–1517 (GAQVSSQKVG…NINRAMTILQ (1516 aa)). 2 amphipathic alpha-helix regions span residues 579–599 (GIED…LPKQ) and 579–603 (GIED…QDSL). Residues His898 and Asp916 each act as for protease 2A activity in the active site. Zn(2+)-binding residues include Cys933 and Cys935. Cys987 functions as the For protease 2A activity in the catalytic mechanism. 2 residues coordinate Zn(2+): Cys993 and His995. The interval 1125-1197 (GDSWLKKFTE…HQSCPSQEHQ (73 aa)) is membrane-binding. The tract at residues 1125–1263 (GDSWLKKFTE…SPGTGKSVAT (139 aa)) is oligomerization. The RNA-binding stretch occupies residues 1146–1150 (SNKIS). Residues 1229–1385 (EHTINNYIQF…GEYSRDGKLN (157 aa)) enclose the SF3 helicase domain. 1253–1260 (GSPGTGKS) serves as a coordination point for ATP. Positions 1393, 1396, 1405, and 1410 each coordinate Zn(2+). The C4-type zinc-finger motif lies at 1393-1410 (CKDCHQPANFKRCCPLVC). Positions 1437–1444 (ERNRRSNI) are RNA-binding. Residues 1448 to 1453 (MEALFQ) form an oligomerization region. The stretch at 1518–1533 (AVTTFAAVAGVVYVMY) is an intramembrane region. Topologically, residues 1534–2206 (KLFAGHQGAY…TLYRRWLDSF (673 aa)) are cytoplasmic. Tyr1543 carries the O-(5'-phospho-RNA)-tyrosine modification. Positions 1563–1741 (GPGFDYAVAM…FAAALKRSYF (179 aa)) constitute a Peptidase C3 domain. Active-site for protease 3C activity residues include His1602, Glu1633, and Cys1709. A RdRp catalytic domain is found at 1972–2087 (EKLFAFDYTG…SYPHEVDASL (116 aa)). Mg(2+) contacts are provided by Asp1978 and Asp2073.

The protein belongs to the picornaviruses polyprotein family. As to quaternary structure, interacts with capsid protein VP1 and capsid protein VP3 to form heterotrimeric protomers. Interacts with capsid protein VP0, and capsid protein VP3 to form heterotrimeric protomers. Interacts with human PVR. Five protomers subsequently associate to form pentamers which serve as building blocks for the capsid. Interacts with capsid protein VP2, capsid protein VP3 and capsid protein VP4 following cleavage of capsid protein VP0. In terms of assembly, interacts with capsid protein VP1 and capsid protein VP3 in the mature capsid. As to quaternary structure, interacts with capsid protein VP0 and capsid protein VP1 to form heterotrimeric protomers. Five protomers subsequently associate to form pentamers which serve as building blocks for the capsid. Interacts with capsid protein VP4 in the mature capsid. Interacts with protein 2C; this interaction may be important for virion morphogenesis. Interacts with capsid protein VP1 and capsid protein VP3. In terms of assembly, homodimer. As to quaternary structure, homohexamer; forms a hexameric ring structure with 6-fold symmetry characteristic of AAA+ ATPases. Interacts (via N-terminus) with host RTN3 (via reticulon domain); this interaction is important for viral replication. Interacts with capsid protein VP3; this interaction may be important for virion morphogenesis. Interacts with protein 3CD. In terms of assembly, homodimer. Interacts with host GBF1. Interacts (via GOLD domain) with host ACBD3 (via GOLD domain); this interaction allows the formation of a viral protein 3A/ACBD3 heterotetramer with a 2:2 stoichiometry, which will stimulate the recruitment of host PI4KB in order to synthesize PI4P at the viral RNA replication sites. As to quaternary structure, interacts with RNA-directed RNA polymerase. Interacts with protein 3AB and with RNA-directed RNA polymerase. In terms of assembly, interacts with Viral protein genome-linked and with protein 3CD. It depends on Mg(2+) as a cofactor. In terms of processing, specific enzymatic cleavages in vivo by the viral proteases yield processing intermediates and the mature proteins. Post-translationally, myristoylation is required for the formation of pentamers during virus assembly. Further assembly of 12 pentamers and a molecule of genomic RNA generates the provirion. During virion maturation, immature virions are rendered infectious following cleavage of VP0 into VP4 and VP2. This maturation seems to be an autocatalytic event triggered by the presence of RNA in the capsid and it is followed by a conformational change infectious virion. In terms of processing, myristoylation is required during RNA encapsidation and formation of the mature virus particle. Post-translationally, VPg is uridylylated by the polymerase into VPg-pUpU. This acts as a nucleotide-peptide primer for the genomic RNA replication.

The protein localises to the virion. It is found in the host cytoplasm. It localises to the host cytoplasmic vesicle membrane. Its subcellular location is the host nucleus. It catalyses the reaction a ribonucleoside 5'-triphosphate + H2O = a ribonucleoside 5'-diphosphate + phosphate + H(+). The catalysed reaction is Selective cleavage of Tyr-|-Gly bond in the picornavirus polyprotein.. It carries out the reaction RNA(n) + a ribonucleoside 5'-triphosphate = RNA(n+1) + diphosphate. The enzyme catalyses Selective cleavage of Gln-|-Gly bond in the poliovirus polyprotein. In other picornavirus reactions Glu may be substituted for Gln, and Ser or Thr for Gly.. Its activity is regulated as follows. Replication or transcription is subject to high level of random mutations by the nucleotide analog ribavirin. Its function is as follows. Forms an icosahedral capsid of pseudo T=3 symmetry with capsid proteins VP2 and VP3. The capsid is 300 Angstroms in diameter, composed of 60 copies of each capsid protein and enclosing the viral positive strand RNA genome. Capsid protein VP1 mainly forms the vertices of the capsid. Capsid protein VP1 interacts with host cell receptor PVR to provide virion attachment to target host cells. This attachment induces virion internalization predominantly through clathrin- and caveolin-independent endocytosis in Hela cells and through caveolin-mediated endocytosis in brain microvascular endothelial cells. Tyrosine kinases are probably involved in the entry process. Virus binding to PVR induces increased junctional permeability and rearrangement of junctional proteins. Modulation of endothelial tight junctions, as well as cytolytic infection of endothelial cells themselves, may result in loss of endothelial integrity which may help the virus to reach the CNS. After binding to its receptor, the capsid undergoes conformational changes. Capsid protein VP1 N-terminus (that contains an amphipathic alpha-helix) and capsid protein VP4 are externalized. Together, they shape a pore in the host membrane through which viral genome is translocated to host cell cytoplasm. In terms of biological role, forms an icosahedral capsid of pseudo T=3 symmetry with capsid proteins VP2 and VP3. The capsid is 300 Angstroms in diameter, composed of 60 copies of each capsid protein and enclosing the viral positive strand RNA genome. Lies on the inner surface of the capsid shell. After binding to the host receptor, the capsid undergoes conformational changes. Capsid protein VP4 is released, Capsid protein VP1 N-terminus is externalized, and together, they shape a pore in the host membrane through which the viral genome is translocated into the host cell cytoplasm. Functionally, component of immature procapsids, which is cleaved into capsid proteins VP4 and VP2 after maturation. Allows the capsid to remain inactive before the maturation step. Its function is as follows. Cysteine protease that cleaves viral polyprotein and specific host proteins. It is responsible for the autocatalytic cleavage between the P1 and P2 regions, which is the first cleavage occurring in the polyprotein. Also cleaves the host translation initiation factor EIF4G1, in order to shut down the capped cellular mRNA translation. Inhibits the host nucleus-cytoplasm protein and RNA trafficking by cleaving host members of the nuclear pores including NUP98, NUP62 and NUP153. Counteracts stress granule formation probably by antagonizing its assembly or promoting its dissassembly. Cleaves and inhibits host IFIH1/MDA5, thereby inhibiting the type-I IFN production and the establishment of the antiviral state. Cleaves and inhibits host MAVS, thereby inhibiting the type-I IFN production and the establishment of the antiviral state. In terms of biological role, plays an essential role in the virus replication cycle by acting as a viroporin. Creates a pore in the host endoplasmic reticulum and as a consequence releases Ca2+ in the cytoplasm of infected cell. In turn, high levels of cytoplasmic calcium may trigger membrane trafficking and transport of viral ER-associated proteins to viroplasms, sites of viral genome replication. Induces and associates with structural rearrangements of intracellular membranes. Displays RNA-binding, nucleotide binding and NTPase activities. May play a role in virion morphogenesis and viral RNA encapsidation by interacting with the capsid protein VP3. Functionally, localizes the viral replication complex to the surface of membranous vesicles. Together with protein 3CD binds the Cis-Active RNA Element (CRE) which is involved in RNA synthesis initiation. Acts as a cofactor to stimulate the activity of 3D polymerase, maybe through a nucleid acid chaperone activity. Its function is as follows. Localizes the viral replication complex to the surface of membranous vesicles. It inhibits host cell endoplasmic reticulum-to-Golgi apparatus transport and causes the disassembly of the Golgi complex, possibly through GBF1 interaction. This would result in depletion of MHC, trail receptors and IFN receptors at the host cell surface. Plays an essential role in viral RNA replication by recruiting ACBD3 and PI4KB at the viral replication sites, thereby allowing the formation of the rearranged membranous structures where viral replication takes place. In terms of biological role, acts as a primer for viral RNA replication and remains covalently bound to viral genomic RNA. VPg is uridylylated prior to priming replication into VPg-pUpU. The oriI viral genomic sequence may act as a template for this. The VPg-pUpU is then used as primer on the genomic RNA poly(A) by the RNA-dependent RNA polymerase to replicate the viral genome. During genome replication, the VPg-RNA linkage is removed by the host TDP2, thereby accelerating replication. During the late stage of the replication cycle, host TDP2 is excluded from sites of viral RNA synthesis and encapsidation, allowing for the generation of progeny virions. Involved in the viral replication complex and viral polypeptide maturation. It exhibits protease activity with a specificity and catalytic efficiency that is different from protease 3C. Protein 3CD lacks polymerase activity. Protein 3CD binds to the 5'UTR of the viral genome. Functionally, major viral protease that mediates proteolytic processing of the polyprotein. Cleaves host EIF5B, contributing to host translation shutoff. Also cleaves host PABPC1, contributing to host translation shutoff. Cleaves host RIGI and thus contributes to the inhibition of type I interferon production. Cleaves host NLRP1, triggers host N-glycine-mediated degradation of the autoinhibitory NLRP1 N-terminal fragment. Inhibits the integrated stress response (ISR) in the infected cell by cleaving host G3BP1. Stress granule formation is thus inhibited, which allows protein synthesis and viral replication. Its function is as follows. Replicates the viral genomic RNA on the surface of intracellular membranes. May form linear arrays of subunits that propagate along a strong head-to-tail interaction called interface-I. Covalently attaches UMP to a tyrosine of VPg, which is used to prime RNA synthesis. The positive stranded RNA genome is first replicated at virus induced membranous vesicles, creating a dsRNA genomic replication form. This dsRNA is then used as template to synthesize positive stranded RNA genomes. ss(+)RNA genomes are either translated, replicated or encapsidated. The protein is Genome polyprotein of Poliovirus type 3 (strains P3/Leon/37 and P3/Leon 12A[1]B).